The sequence spans 140 residues: Transcription antitermination protein NusB (140 aa).

This sequence belongs to the NusB family.

Functionally, involved in transcription antitermination. Required for transcription of ribosomal RNA (rRNA) genes. Binds specifically to the boxA antiterminator sequence of the ribosomal RNA (rrn) operons. This is Transcription antitermination protein NusB from Leptospira biflexa serovar Patoc (strain Patoc 1 / Ames).